Here is a 201-residue protein sequence, read N- to C-terminus: Oligoribonuclease (201 aa).

Residues 5-169 (MVWIDCEMTG…ADIRDSITEL (165 aa)) enclose the Exonuclease domain. Tyr-126 is an active-site residue.

This sequence belongs to the oligoribonuclease family.

Its subcellular location is the cytoplasm. Its function is as follows. 3'-to-5' exoribonuclease specific for small oligoribonucleotides. This Streptomyces griseus protein is Oligoribonuclease.